The sequence spans 378 residues: Glutamate 5-kinase (378 aa).

Residue lysine 17 participates in ATP binding. Substrate is bound by residues serine 58, aspartate 145, and asparagine 157. Residues 177–178 and 221–227 contribute to the ATP site; these read TD and TGGMMTK. Residues 286–364 enclose the PUA domain; that stretch reads VGKLYLDSGA…KEIPTILGYV (79 aa).

Belongs to the glutamate 5-kinase family.

Its subcellular location is the cytoplasm. The enzyme catalyses L-glutamate + ATP = L-glutamyl 5-phosphate + ADP. Its pathway is amino-acid biosynthesis; L-proline biosynthesis; L-glutamate 5-semialdehyde from L-glutamate: step 1/2. Catalyzes the transfer of a phosphate group to glutamate to form L-glutamate 5-phosphate. The chain is Glutamate 5-kinase from Nostoc sp. (strain PCC 7120 / SAG 25.82 / UTEX 2576).